A 453-amino-acid polypeptide reads, in one-letter code: uncharacterized protein (453 aa).

The protein to S.faecalis plasmid PAM373 EP0012.

This is an uncharacterized protein from Listeria innocua serovar 6a (strain ATCC BAA-680 / CLIP 11262).